Reading from the N-terminus, the 165-residue chain is Phosphopantetheine adenylyltransferase (165 aa).

Ser-9 provides a ligand contact to substrate. ATP is bound by residues 9–10 (SF) and His-17. 3 residues coordinate substrate: Lys-41, Ile-75, and Arg-89. Residues 90–92 (GVR), Glu-100, and 125–131 (YLFVRSD) contribute to the ATP site.

It belongs to the bacterial CoaD family. Homohexamer. It depends on Mg(2+) as a cofactor.

Its subcellular location is the cytoplasm. The catalysed reaction is (R)-4'-phosphopantetheine + ATP + H(+) = 3'-dephospho-CoA + diphosphate. Its pathway is cofactor biosynthesis; coenzyme A biosynthesis; CoA from (R)-pantothenate: step 4/5. Its function is as follows. Reversibly transfers an adenylyl group from ATP to 4'-phosphopantetheine, yielding dephospho-CoA (dPCoA) and pyrophosphate. The protein is Phosphopantetheine adenylyltransferase of Borrelia hermsii (strain HS1 / DAH).